The following is a 111-amino-acid chain: MTGGLIAAGLGLAAVGFGARYVLRNQALIKKGMEALPVAGGLNSYYRGGFDQKMSRSEAAKILGITPSAKPAKIKDAHKKVMIVNHPDRGGSPYLAAKINEAKDLMESTKS.

Residues 1 to 3 lie on the Mitochondrial intermembrane side of the membrane; that stretch reads MTG. A helical membrane pass occupies residues 4–24; sequence GLIAAGLGLAAVGFGARYVLR. Topologically, residues 25-111 are mitochondrial matrix; that stretch reads NQALIKKGME…AKDLMESTKS (87 aa). A J domain is found at 58–111; that stretch reads EAAKILGITPSAKPAKIKDAHKKVMIVNHPDRGGSPYLAAKINEAKDLMESTKS.

This sequence belongs to the TIM14 family. In terms of assembly, probable component of the PAM complex at least composed of a mitochondrial HSP70 protein, GrpE, tim-44, tim-16 and tim-14.

The protein resides in the mitochondrion inner membrane. Functionally, probable component of the PAM complex, a complex required for the translocation of transit peptide-containing proteins from the inner membrane into the mitochondrial matrix in an ATP-dependent manner. May act as a co-chaperone that stimulate the ATP-dependent activity. This chain is Mitochondrial import inner membrane translocase subunit TIM14 (dnj-21), found in Caenorhabditis briggsae.